The sequence spans 332 residues: Glycerol-3-phosphate dehydrogenase [NAD(P)+] (332 aa).

NADPH is bound by residues tryptophan 13, lysine 34, and lysine 108. Positions 108, 136, and 138 each coordinate sn-glycerol 3-phosphate. Alanine 140 is an NADPH binding site. 5 residues coordinate sn-glycerol 3-phosphate: lysine 191, aspartate 244, serine 254, arginine 255, and asparagine 256. Lysine 191 serves as the catalytic Proton acceptor. Residue arginine 255 coordinates NADPH. Residues valine 279 and glutamate 281 each contribute to the NADPH site.

Belongs to the NAD-dependent glycerol-3-phosphate dehydrogenase family.

It localises to the cytoplasm. The catalysed reaction is sn-glycerol 3-phosphate + NAD(+) = dihydroxyacetone phosphate + NADH + H(+). The enzyme catalyses sn-glycerol 3-phosphate + NADP(+) = dihydroxyacetone phosphate + NADPH + H(+). Its pathway is membrane lipid metabolism; glycerophospholipid metabolism. Its function is as follows. Catalyzes the reduction of the glycolytic intermediate dihydroxyacetone phosphate (DHAP) to sn-glycerol 3-phosphate (G3P), the key precursor for phospholipid synthesis. The protein is Glycerol-3-phosphate dehydrogenase [NAD(P)+] of Francisella tularensis subsp. novicida (strain U112).